Reading from the N-terminus, the 318-residue chain is sn-1 stearoyl-lipid 9-desaturase (318 aa).

2 consecutive transmembrane segments (helical) span residues 56–76 and 80–100; these read VIFF…PQFF and AVGM…TLGF. A Histidine box-1 motif is present at residues 101–106; it reads HRCISH. The chain crosses the membrane as a helical span at residues 117 to 137; the sequence is YIFVICGTLACQGGVFEWVGL. The short motif at 138–142 is the Histidine box-2 element; the sequence is HRMHH. Residues 201–221 traverse the membrane as a helical segment; that stretch reads VALGLILFALGGWPFVIWGIF. Residues 271-275 carry the Histidine box-3 motif; it reads HHAYQ.

It belongs to the fatty acid desaturase type 2 family. Fe(2+) is required as a cofactor.

Its subcellular location is the cellular thylakoid membrane. It carries out the reaction a 1-octadecanoyl 2-acyl-glycerolipid + 2 reduced [2Fe-2S]-[ferredoxin] + O2 + 2 H(+) = a 1-[(9Z)-octadecenoyl]-2-acyl-glycerolipid + 2 oxidized [2Fe-2S]-[ferredoxin] + 2 H2O. Its pathway is lipid metabolism; polyunsaturated fatty acid biosynthesis. Functionally, desaturase involved in fatty acid biosynthesis. Introduces a double bond at carbon 9 of stearoyl groups (18:0) attached to the sn-1 position of the glycerol moiety of membrane glycerolipids. Does not desaturate palmitic acid (16:0), palmitoleic acid (16:1) and cis-vaccenic acid (18:1). In Synechocystis sp. (strain ATCC 27184 / PCC 6803 / Kazusa), this protein is sn-1 stearoyl-lipid 9-desaturase.